A 359-amino-acid polypeptide reads, in one-letter code: RNA 3'-terminal phosphate cyclase (359 aa).

Residues Gln-100 and 291-294 (HASD) each bind ATP. His-317 serves as the catalytic Tele-AMP-histidine intermediate.

Belongs to the RNA 3'-terminal cyclase family. Type 1 subfamily.

The protein localises to the cytoplasm. It catalyses the reaction a 3'-end 3'-phospho-ribonucleotide-RNA + ATP = a 3'-end 2',3'-cyclophospho-ribonucleotide-RNA + AMP + diphosphate. Its function is as follows. Catalyzes the conversion of 3'-phosphate to a 2',3'-cyclic phosphodiester at the end of RNA. The mechanism of action of the enzyme occurs in 3 steps: (A) adenylation of the enzyme by ATP; (B) transfer of adenylate to an RNA-N3'P to produce RNA-N3'PP5'A; (C) and attack of the adjacent 2'-hydroxyl on the 3'-phosphorus in the diester linkage to produce the cyclic end product. The biological role of this enzyme is unknown but it is likely to function in some aspects of cellular RNA processing. The protein is RNA 3'-terminal phosphate cyclase of Hyperthermus butylicus (strain DSM 5456 / JCM 9403 / PLM1-5).